Reading from the N-terminus, the 398-residue chain is Cytohesin-1 (398 aa).

An N-acetylmethionine modification is found at Met1. A necessary for localization at adherens junction region spans residues 1–60; the sequence is MEDDDSYVPSDLTAEERQELENIRRRKQELLADIQRLKEEIAEVANEIESLGSTEERKNM. A coiled-coil region spans residues 10 to 67; that stretch reads SDLTAEERQELENIRRRKQELLADIQRLKEEIAEVANEIESLGSTEERKNMQRNKQVA. The region spanning 73–202 is the SEC7 domain; the sequence is FNMDPKKGIQ…IIMLNTSLHN (130 aa). The region spanning 260 to 377 is the PH domain; that stretch reads NPDREGWLLK…WIKCIKAAIS (118 aa). Residues 269–277, Arg281, Tyr292, Arg302, and Asn351 contribute to the a 1,2-diacyl-sn-glycero-3-phospho-(1D-myo-inositol-3,4,5-trisphosphate) site; that span reads KLGGGRVKT. The tract at residues 388–396 is C-terminal autoinhibitory region; that stretch reads RKKKVSSTK.

Interacts with TRIM23 and CYTIP. Interacts (via coiled-coil domain) with FRMD4A (via coiled-coil domain). Interacts with FRMD4B. Found in a complex with PARD3, CYTH1 and FRMD4A. Interacts (via N-terminal domain) with INAVA (via N-terminal domain). Ubiquitinated by SCF(FBXW11) E3 ubiquitin-protein ligase complex. Ubiquitination induces proteasomal degradation. In terms of tissue distribution, expressed in colon and small intestine (at protein level).

It localises to the cell membrane. Its subcellular location is the cytoplasm. It is found in the cytosol. The protein localises to the cell junction. The protein resides in the tight junction. It localises to the adherens junction. Its function is as follows. Promotes guanine-nucleotide exchange on ARF1, ARF5 and ARF6. Promotes the activation of ARF factors through replacement of GDP with GTP. Plays an important role in membrane trafficking, during junctional remodeling and epithelial polarization, through regulation of ARF6 activity. The chain is Cytohesin-1 (Cyth1) from Mus musculus (Mouse).